We begin with the raw amino-acid sequence, 260 residues long: Small ribosomal subunit protein uS2 (260 aa).

Belongs to the universal ribosomal protein uS2 family.

The polypeptide is Small ribosomal subunit protein uS2 (Streptococcus sanguinis (strain SK36)).